A 313-amino-acid chain; its full sequence is Formimidoylglutamase (313 aa).

Mn(2+) contacts are provided by histidine 130, aspartate 155, histidine 157, aspartate 159, aspartate 241, and aspartate 243.

Belongs to the arginase family. The cofactor is Mn(2+).

The catalysed reaction is N-formimidoyl-L-glutamate + H2O = formamide + L-glutamate. Its pathway is amino-acid degradation; L-histidine degradation into L-glutamate; L-glutamate from N-formimidoyl-L-glutamate (hydrolase route): step 1/1. Catalyzes the conversion of N-formimidoyl-L-glutamate to L-glutamate and formamide. The sequence is that of Formimidoylglutamase from Citrobacter koseri (strain ATCC BAA-895 / CDC 4225-83 / SGSC4696).